Here is a 273-residue protein sequence, read N- to C-terminus: Dermonecrotic toxin LarSicTox-alphaVII1 (273 aa).

The active site involves His-5. 2 residues coordinate Mg(2+): Glu-25 and Asp-27. The active-site Nucleophile is the His-41. Disulfide bonds link Cys-45–Cys-51 and Cys-47–Cys-192. Asp-85 is a Mg(2+) binding site.

It belongs to the arthropod phospholipase D family. Class II subfamily. Requires Mg(2+) as cofactor. In terms of tissue distribution, expressed by the venom gland.

It localises to the secreted. The enzyme catalyses an N-(acyl)-sphingosylphosphocholine = an N-(acyl)-sphingosyl-1,3-cyclic phosphate + choline. The catalysed reaction is an N-(acyl)-sphingosylphosphoethanolamine = an N-(acyl)-sphingosyl-1,3-cyclic phosphate + ethanolamine. It carries out the reaction a 1-acyl-sn-glycero-3-phosphocholine = a 1-acyl-sn-glycero-2,3-cyclic phosphate + choline. It catalyses the reaction a 1-acyl-sn-glycero-3-phosphoethanolamine = a 1-acyl-sn-glycero-2,3-cyclic phosphate + ethanolamine. Functionally, dermonecrotic toxins cleave the phosphodiester linkage between the phosphate and headgroup of certain phospholipids (sphingolipid and lysolipid substrates), forming an alcohol (often choline) and a cyclic phosphate. This toxin acts on sphingomyelin (SM). It may also act on ceramide phosphoethanolamine (CPE), lysophosphatidylcholine (LPC) and lysophosphatidylethanolamine (LPE), but not on lysophosphatidylserine (LPS), and lysophosphatidylglycerol (LPG). It acts by transphosphatidylation, releasing exclusively cyclic phosphate products as second products. Induces dermonecrosis, hemolysis, increased vascular permeability, edema, inflammatory response, and platelet aggregation. The protein is Dermonecrotic toxin LarSicTox-alphaVII1 of Loxosceles arizonica (Arizona brown spider).